A 211-amino-acid polypeptide reads, in one-letter code: Cyclin-dependent kinase inhibitor 3 (211 aa).

Residues 1–20 (MKPPISIQASEFDSSDEEPV) form a disordered region. Residues 1–34 (MKPPISIQASEFDSSDEEPVDEEQTPIQISWLPL) are interaction with CDK2. Positions 32–200 (LPLSRVNCSQ…FRDKLAAYLS (169 aa)) constitute a Tyrosine-protein phosphatase domain. C140 serves as the catalytic Phosphocysteine intermediate.

It belongs to the protein-tyrosine phosphatase family. As to quaternary structure, interacts with cyclin-dependent kinases such as CDK1, CDK2 and CDK3. Does not interact with CDK4. Interacts (via C-terminus) with phosphorylated CDK2 (via C-terminal helix). Interacts with MS4A3 (via C-terminus); the interaction enhances CDKN3 enzymatic activity.

The protein localises to the cytoplasm. It localises to the perinuclear region. It carries out the reaction O-phospho-L-tyrosyl-[protein] + H2O = L-tyrosyl-[protein] + phosphate. The enzyme catalyses O-phospho-L-seryl-[protein] + H2O = L-seryl-[protein] + phosphate. The catalysed reaction is O-phospho-L-threonyl-[protein] + H2O = L-threonyl-[protein] + phosphate. Its function is as follows. May play a role in cell cycle regulation. Dual specificity phosphatase active toward substrates containing either phosphotyrosine or phosphoserine residues. Dephosphorylates CDK2 at 'Thr-160' in a cyclin-dependent manner. This Mus musculus (Mouse) protein is Cyclin-dependent kinase inhibitor 3.